We begin with the raw amino-acid sequence, 83 residues long: Exodeoxyribonuclease 7 small subunit (83 aa).

This sequence belongs to the XseB family. As to quaternary structure, heterooligomer composed of large and small subunits.

The protein resides in the cytoplasm. It carries out the reaction Exonucleolytic cleavage in either 5'- to 3'- or 3'- to 5'-direction to yield nucleoside 5'-phosphates.. Bidirectionally degrades single-stranded DNA into large acid-insoluble oligonucleotides, which are then degraded further into small acid-soluble oligonucleotides. In Aeromonas salmonicida (strain A449), this protein is Exodeoxyribonuclease 7 small subunit.